A 356-amino-acid chain; its full sequence is Tyrosine recombinase XerS (356 aa).

A Core-binding (CB) domain is found at 16-121 (IMPWYVLDYY…ALSSLYKYLT (106 aa)). Residues 169-354 (AFLDYVDKEY…VNDEQKNALD (186 aa)) form the Tyr recombinase domain. Residues R210, K234, H306, R309, and H332 contribute to the active site. The O-(3'-phospho-DNA)-tyrosine intermediate role is filled by Y341.

Belongs to the 'phage' integrase family. XerS subfamily.

Its subcellular location is the cytoplasm. FtsK is required for recombination. Functionally, site-specific tyrosine recombinase, which acts by catalyzing the cutting and rejoining of the recombining DNA molecules. Essential to convert dimers of the bacterial chromosome into monomers to permit their segregation at cell division. The polypeptide is Tyrosine recombinase XerS (Streptococcus pyogenes serotype M1).